Consider the following 817-residue polypeptide: V-type proton ATPase subunit a1 (817 aa).

Over 1 to 422 (MEEFLDKLPQ…PAVYSVVTYP (422 aa)) the chain is Cytoplasmic. Positions 97 to 133 (DIALGDLERQLADHEHEVLEMNSNSEKLRQTYNELLE) form a coiled coil. The helical transmembrane segment at 423–443 (FLFAVMFGDWGHGLCLLLGAL) threads the bilayer. Residues 444–468 (YLLARERKLSTQKLGSFMEMLFGGR) are Vacuolar-facing. The helical transmembrane segment at 469 to 489 (YVILLMALFSIYCGLIYNEFF) threads the bilayer. The Cytoplasmic segment spans residues 490–547 (SVPFHIFGGSAYKCRDTTCSDAYTVGLIKYRDPYPFGVDPSWRGSRTELPYLNSLKMK). Residues 548-568 (MSILLGIAQMNLGLILSFFNA) traverse the membrane as a helical segment. Topologically, residues 569 to 580 (RFFGSSLDIRYQ) are vacuolar. The chain crosses the membrane as a helical span at residues 581–601 (FIPQMIFLNSLFGYLSLLIII). Residues 602 to 639 (KWCTGSQADLYHVMIYMFLSPTEELGENELFWGQRPLQ) lie on the Cytoplasmic side of the membrane. The chain crosses the membrane as a helical span at residues 640–660 (IVLLLLAFIAVPWMLFPKPFA). Residues 661-758 (LRKIHMERFQ…VLLLAWGYEN (98 aa)) lie on the Vacuolar side of the membrane. Residues 759–779 (ILIRLIGVAVFAFATAFILLM) traverse the membrane as a helical segment. Topologically, residues 780–817 (METLSAFLHALRLHWVEFMGKFFNGDGYKFKPFSFALI) are cytoplasmic.

Belongs to the V-ATPase 116 kDa subunit family. As to quaternary structure, V-ATPase is a heteromultimeric enzyme composed of a peripheral catalytic V1 complex (components A to H) attached to an integral membrane V0 proton pore complex (components: a, c, c'', d and e).

It localises to the vacuole membrane. It is found in the golgi apparatus. The protein localises to the trans-Golgi network membrane. Essential component of the vacuolar proton pump (V-ATPase), a multimeric enzyme that catalyzes the translocation of protons across the membranes. Required for assembly and activity of the V-ATPase. Required during cell expansion. The protein is V-type proton ATPase subunit a1 of Arabidopsis thaliana (Mouse-ear cress).